The primary structure comprises 303 residues: Probable cell division protein WhiA (303 aa).

Positions 272–303 (SIQQLADSLSKPLTKSGVNHRLRKINKIADEL) form a DNA-binding region, H-T-H motif.

The protein belongs to the WhiA family.

Its function is as follows. Involved in cell division and chromosome segregation. This chain is Probable cell division protein WhiA, found in Streptococcus gordonii (strain Challis / ATCC 35105 / BCRC 15272 / CH1 / DL1 / V288).